The sequence spans 417 residues: SNF1 protein kinase subunit beta-3 (417 aa).

Positions 1-12 (MAGDNPENKDAS) are enriched in basic and acidic residues. Positions 1 to 37 (MAGDNPENKDASMLDVSDAASNTTINGKHSADSTNEA) are disordered. Phosphoserine occurs at positions 12, 21, 44, and 135. A compositionally biased stretch (polar residues) spans 19–37 (AASNTTINGKHSADSTNEA). Disordered regions lie at residues 64–155 (SSLI…VEGK) and 250–269 (GNEP…DDSK). Polar residues predominate over residues 118 to 136 (TGNTLQKMDYQPSQQPDSL). The span at 137-149 (QNQGFQQQQEQQQ) shows a compositional bias: low complexity. Residues 152–342 (VEGKKGRAMM…DQQQNNHQNM (191 aa)) form a kinase-interacting sequence (KIS); required for interaction with SNF1 region. Positions 257-269 (LAEKKANHVDDSK) are enriched in basic and acidic residues. A phosphoserine mark is found at serine 276 and serine 279. Positions 343–417 (AWLTPPQLPP…VTQILYTPLQ (75 aa)) are association with SNF1 kinase complex (ASC) domain; required for interaction with SNF4.

Belongs to the 5'-AMP-activated protein kinase beta subunit family. Component of the SNF1 kinase complex, a heterotrimeric complex composed of the catalytic alpha subunit SNF1, one of the three related beta subunits SIP1, SIP2 or GAL83, and the regulatory gamma subunit SNF4. The beta subunit serves as a bridge between the catalytic and the regulatory subunit. Interacts (via KIS domain) with SNF1. Interacts (via ASC domain) with SNF4. Interacts with REE1. Phosphorylated by SNF1 in vitro.

It localises to the cytoplasm. Its subcellular location is the nucleus. Functionally, beta subunit of the SNF1 kinase complex, which is required for transcriptional, metabolic, and developmental adaptations in response to glucose limitation. Has a structural role, mediating heterotrimer formation, and a regulatory role, defining carbon source-regulated subcellular location and substrate specificity of the SNF1 kinase complex. Promotes the relocalization of the SNF1 kinase complex to the nucleus upon shift to nonfermentable carbon sources. The chain is SNF1 protein kinase subunit beta-3 (GAL83) from Saccharomyces cerevisiae (strain ATCC 204508 / S288c) (Baker's yeast).